Here is an 888-residue protein sequence, read N- to C-terminus: MLEKSFVPADHENALYDAWEKSGAFRAHPDQPGEPFSIMFPPPNVTGTLHLGHSLNFVLQDMLIRWKRQEGFNVLWQPGTDHAGIATQMVVERALDKEGTSRTALGREGFLERVWDWKQEYGGTIVKQLRKLGASADWERERFTMDDGLSRAVRKVFVTLYNEGLIYRDRRLVNWDPKFRSAISDLEVENHETKGSMWYIRYPLEDGRTITVATTRPETMLGDVAVAVHPEDERYADMIGKTVILPLTGRRIPVVADLHSDPEKGTGAVKITPAHDFNDFEVGKRHDLPAPTVLDETACLWIEEIRPELRDVEGLASVAFVETLNGLSREEGRKQVVAELERLEWLEKIEPHKLQVPHAERGGAIVEPRLTLQWYCDAKTLSGPAVEAVESGKIAFEPRQWENTFHAWMRDIQPWCISRQLWWGHRIPAWYGADGKVYVAENEQDAQVQAGEGVSLTQDEDVLDTWFSSALWPFTTLGWPDRTEELARYYPTSVLVTGFDIIFFWVARMMMMGLHFMDDVPFRTVLIHGLVRDEKGQKMSKSKGNGLDPLDLVAEFGADATRLAICAGTGPGRDIKLGRKRVEEHRAFVTKLWNAARFLEMNGAKPTEDFDPASVKSALGRWILTEANDAITEAGRALSVYRFDEYASCCYRFVWSRFCDWFVEFSKPVFAAENEETAELRAVSAHVLGLILRLMQPVIPFVTATLWQELGYPGKFEEIRWPEIMTVTRADEARAELDWVIRLIGDVRTVRSEMNIPPSQKAPLLLRDAAPENLERAKTWAEAIGRMARVSDVGVVGEDAPRNAAQLVLDEATVFIPLEGLIDLDAERARLAKEITRIEGEILKVTRKLDNADFVARAKPEVVEENHDRLATFQSDLERLKAALGRLA.

Positions 43–53 match the 'HIGH' region motif; the sequence is PNVTGTLHLGH. The 'KMSKS' region motif lies at 538–542; the sequence is KMSKS. Residue lysine 541 coordinates ATP. The stretch at 821–888 forms a coiled coil; sequence LIDLDAERAR…RLKAALGRLA (68 aa).

The protein belongs to the class-I aminoacyl-tRNA synthetase family. ValS type 1 subfamily. In terms of assembly, monomer.

It localises to the cytoplasm. The catalysed reaction is tRNA(Val) + L-valine + ATP = L-valyl-tRNA(Val) + AMP + diphosphate. Its function is as follows. Catalyzes the attachment of valine to tRNA(Val). As ValRS can inadvertently accommodate and process structurally similar amino acids such as threonine, to avoid such errors, it has a 'posttransfer' editing activity that hydrolyzes mischarged Thr-tRNA(Val) in a tRNA-dependent manner. This chain is Valine--tRNA ligase, found in Gluconobacter oxydans (strain 621H) (Gluconobacter suboxydans).